The following is a 244-amino-acid chain: MALRAQFENSNEIGVFSNLTNSYALVALGGSENFYSVFEAELGDVVPVVHTTIGGTRIIGRLTCGNRKGLLVPSSTTDNELQHLRNSLPDPVKIQRVDERLSALGNIVACNDYVALVHPDIERETEEIIADVLDVEVFRQTVAGNVLTGSYCALSNQGALVHPRTSIQEQDELSSLLQVPLVAGTINRGSDVIGAGLVVNDWCAFAGLDTTATELAVCESIFKLQDAQPSAIISNRDTLVESYT.

A phosphoserine; by CK1 mark is found at serine 174 and serine 175.

The protein belongs to the eIF-6 family. In terms of assembly, monomer. Associates with the 60S ribosomal subunit. In terms of processing, phosphorylation at Ser-174 and Ser-175 promotes nuclear export.

The protein localises to the cytoplasm. The protein resides in the nucleus. It localises to the nucleolus. In terms of biological role, binds to the 60S ribosomal subunit and prevents its association with the 40S ribosomal subunit to form the 80S initiation complex in the cytoplasm. Is also involved in ribosome biogenesis. Associates with pre-60S subunits in the nucleus and is involved in its nuclear export. The chain is Eukaryotic translation initiation factor 6 (tif6) from Schizosaccharomyces pombe (strain 972 / ATCC 24843) (Fission yeast).